Here is a 61-residue protein sequence, read N- to C-terminus: Small ribosomal subunit protein uS14 (61 aa).

Positions 24, 27, 40, and 43 each coordinate Zn(2+).

This sequence belongs to the universal ribosomal protein uS14 family. Zinc-binding uS14 subfamily. Part of the 30S ribosomal subunit. Contacts proteins S3 and S10. Zn(2+) serves as cofactor.

In terms of biological role, binds 16S rRNA, required for the assembly of 30S particles and may also be responsible for determining the conformation of the 16S rRNA at the A site. The sequence is that of Small ribosomal subunit protein uS14 from Rhodopirellula baltica (strain DSM 10527 / NCIMB 13988 / SH1).